The sequence spans 203 residues: uncharacterized protein (203 aa).

Positions 1-20 are cleaved as a signal peptide; the sequence is MDELILPILILLFLVFVAYF.

This is an uncharacterized protein from Pasteurella multocida (strain Pm70).